We begin with the raw amino-acid sequence, 215 residues long: Phosphatidylserine decarboxylase proenzyme (215 aa).

Ser-184 acts as the Schiff-base intermediate with substrate; via pyruvic acid in catalysis. Ser-184 bears the Pyruvic acid (Ser); by autocatalysis mark.

The protein belongs to the phosphatidylserine decarboxylase family. PSD-A subfamily. As to quaternary structure, heterodimer of a large membrane-associated beta subunit and a small pyruvoyl-containing alpha subunit. Requires pyruvate as cofactor. In terms of processing, is synthesized initially as an inactive proenzyme. Formation of the active enzyme involves a self-maturation process in which the active site pyruvoyl group is generated from an internal serine residue via an autocatalytic post-translational modification. Two non-identical subunits are generated from the proenzyme in this reaction, and the pyruvate is formed at the N-terminus of the alpha chain, which is derived from the carboxyl end of the proenzyme. The post-translation cleavage follows an unusual pathway, termed non-hydrolytic serinolysis, in which the side chain hydroxyl group of the serine supplies its oxygen atom to form the C-terminus of the beta chain, while the remainder of the serine residue undergoes an oxidative deamination to produce ammonia and the pyruvoyl prosthetic group on the alpha chain.

Its subcellular location is the cell membrane. It catalyses the reaction a 1,2-diacyl-sn-glycero-3-phospho-L-serine + H(+) = a 1,2-diacyl-sn-glycero-3-phosphoethanolamine + CO2. Its pathway is phospholipid metabolism; phosphatidylethanolamine biosynthesis; phosphatidylethanolamine from CDP-diacylglycerol: step 2/2. Functionally, catalyzes the formation of phosphatidylethanolamine (PtdEtn) from phosphatidylserine (PtdSer). The sequence is that of Phosphatidylserine decarboxylase proenzyme from Aromatoleum aromaticum (strain DSM 19018 / LMG 30748 / EbN1) (Azoarcus sp. (strain EbN1)).